The following is a 475-amino-acid chain: Ribulose bisphosphate carboxylase large chain (475 aa).

The substrate site is built by N123 and T173. Catalysis depends on K175, which acts as the Proton acceptor. K177 is a substrate binding site. Mg(2+)-binding residues include K201, D203, and E204. K201 is subject to N6-carboxylysine. H294 (proton acceptor) is an active-site residue. The substrate site is built by R295, H327, and S379.

The protein belongs to the RuBisCO large chain family. Type I subfamily. In terms of assembly, heterohexadecamer of 8 large chains and 8 small chains; disulfide-linked. The disulfide link is formed within the large subunit homodimers. Interacts with assembly factor Raf1 which helps form the holoenzyme, most interaction (and folding) occurs in the cytoplasm. Requires Mg(2+) as cofactor. Post-translationally, the disulfide bond which can form in the large chain dimeric partners within the hexadecamer appears to be associated with oxidative stress and protein turnover.

Its subcellular location is the carboxysome. The protein localises to the cytoplasm. It carries out the reaction 2 (2R)-3-phosphoglycerate + 2 H(+) = D-ribulose 1,5-bisphosphate + CO2 + H2O. The enzyme catalyses D-ribulose 1,5-bisphosphate + O2 = 2-phosphoglycolate + (2R)-3-phosphoglycerate + 2 H(+). RuBisCO catalyzes two reactions: the carboxylation of D-ribulose 1,5-bisphosphate, the primary event in carbon dioxide fixation, as well as the oxidative fragmentation of the pentose substrate in the photorespiration process. Both reactions occur simultaneously and in competition at the same active site. This chain is Ribulose bisphosphate carboxylase large chain, found in Thermosynechococcus vestitus (strain NIES-2133 / IAM M-273 / BP-1).